We begin with the raw amino-acid sequence, 1149 residues long: Translocase of chloroplast 126, chloroplastic (1149 aa).

Disordered regions lie at residues 1–206 (MDAL…GKEL), 219–292 (NMPN…RELT), and 315–431 (LELK…VNPS). Residues 131 to 142 (LYYDDYGDDGEV) show a composition bias toward acidic residues. Over residues 152–168 (TSSSSSSSSSECSSSAS) the composition is skewed to low complexity. Composition is skewed to acidic residues over residues 271-280 (YDQEGEDADS) and 335-357 (GESDADADADADDEDVESGDEHE). Over residues 406 to 429 (TAATDTQSSNAASSTQVAGTTDVN) the composition is skewed to polar residues. In terms of domain architecture, AIG1-type G spans 514-743 (DFACTILVLG…KLQDTAAPGR (230 aa)). The G1 stretch occupies residues 523 to 530 (GKTGVGKS). GTP is bound at residue 526–531 (GVGKSA). Serine 530 is a Mg(2+) binding site. The segment at 550-554 (STTNV) is G2. The tract at residues 570 to 573 (DTPG) is G3. Residues 642-645 (THAS) are G4. GTP contacts are provided by residues histidine 643 and 691-692 (EN). A G5 region spans residues 691-693 (ENH). 2 disordered regions span residues 769–800 (KLPDEQLDESDESDDDEEDEEEGDEYDDLPPF) and 833–869 (KQHREQLQRRKEMKKRATAMRKEGLSHPADEADDEAG). The segment covering 773 to 796 (EQLDESDESDDDEEDEEEGDEYDD) has biased composition (acidic residues). 2 stretches are compositionally biased toward basic and acidic residues: residues 833–842 (KQHREQLQRR) and 852–862 (MRKEGLSHPAD). The chain crosses the membrane as a helical span at residues 1123-1144 (MVLIGIVPILRSLINCRFGFGG).

This sequence belongs to the TRAFAC class TrmE-Era-EngA-EngB-Septin-like GTPase superfamily. AIG1/Toc34/Toc159-like paraseptin GTPase family. TOC159 subfamily. As to quaternary structure, part of the TOC core complex. Requires Mg(2+) as cofactor.

Its subcellular location is the plastid. It localises to the chloroplast outer membrane. Its function is as follows. GTPase involved in protein precursor import into chloroplasts. Seems to recognize chloroplast-destined precursor proteins and regulate their presentation to the translocation channel through GTP hydrolysis. Probably specialized in the import of nuclear encoded non-photosynthetic preproteins from the cytoplasm to the chloroplast. The chain is Translocase of chloroplast 126, chloroplastic from Physcomitrium patens (Spreading-leaved earth moss).